A 349-amino-acid polypeptide reads, in one-letter code: Hydroxymethylglutaryl-CoA synthase (349 aa).

Asp-29 lines the (3S)-3-hydroxy-3-methylglutaryl-CoA pocket. Glu-81 serves as the catalytic Proton donor/acceptor. (3S)-3-hydroxy-3-methylglutaryl-CoA contacts are provided by Cys-113, Ser-154, Thr-202, and His-235. Cys-113 serves as the catalytic Acyl-thioester intermediate. His-235 functions as the Proton donor/acceptor in the catalytic mechanism. A CoA-binding site is contributed by Arg-240. Arg-244, Asn-267, and Ser-297 together coordinate (3S)-3-hydroxy-3-methylglutaryl-CoA.

This sequence belongs to the thiolase-like superfamily. Archaeal HMG-CoA synthase family. In terms of assembly, interacts with acetoacetyl-CoA thiolase that catalyzes the precedent step in the pathway and with a DUF35 protein. The acetoacetyl-CoA thiolase/HMG-CoA synthase complex channels the intermediate via a fused CoA-binding site, which allows for efficient coupling of the endergonic thiolase reaction with the exergonic HMGCS reaction.

The catalysed reaction is acetoacetyl-CoA + acetyl-CoA + H2O = (3S)-3-hydroxy-3-methylglutaryl-CoA + CoA + H(+). It functions in the pathway metabolic intermediate biosynthesis; (R)-mevalonate biosynthesis; (R)-mevalonate from acetyl-CoA: step 2/3. In terms of biological role, catalyzes the condensation of acetyl-CoA with acetoacetyl-CoA to form 3-hydroxy-3-methylglutaryl-CoA (HMG-CoA). Functions in the mevalonate (MVA) pathway leading to isopentenyl diphosphate (IPP), a key precursor for the biosynthesis of isoprenoid compounds that are building blocks of archaeal membrane lipids. The chain is Hydroxymethylglutaryl-CoA synthase from Pyrobaculum arsenaticum (strain DSM 13514 / JCM 11321 / PZ6).